A 235-amino-acid chain; its full sequence is MNKVSLLHEGKAKKVFLTDNSDLVIQEFKDDATAFNAKKKGSIQNKGVVNNAISCTLFTFLGENGIPTHYVEQLSDRDMLCKHLDIIKVEVVVRNVAAGSLVRRYGFKEGFVLETPIIELYLKDDDLDDPLMNESHAVALGLASYEELDRLKELAAAINTLLRSFFADRKLNLVDFKLEFGRHNGTILLGDEISPDTCRFWDLDSGEKMDKDRFRFDMGGVEDAYSEVQRRVLEL.

This sequence belongs to the SAICAR synthetase family.

It catalyses the reaction 5-amino-1-(5-phospho-D-ribosyl)imidazole-4-carboxylate + L-aspartate + ATP = (2S)-2-[5-amino-1-(5-phospho-beta-D-ribosyl)imidazole-4-carboxamido]succinate + ADP + phosphate + 2 H(+). The protein operates within purine metabolism; IMP biosynthesis via de novo pathway; 5-amino-1-(5-phospho-D-ribosyl)imidazole-4-carboxamide from 5-amino-1-(5-phospho-D-ribosyl)imidazole-4-carboxylate: step 1/2. The polypeptide is Phosphoribosylaminoimidazole-succinocarboxamide synthase (Prosthecochloris aestuarii (strain DSM 271 / SK 413)).